The sequence spans 516 residues: GMP synthase [glutamine-hydrolyzing] (516 aa).

Residues 6–198 form the Glutamine amidotransferase type-1 domain; the sequence is KVIIVDYGSQ…LFKIAGIKAD (193 aa). Cysteine 83 functions as the Nucleophile in the catalytic mechanism. Catalysis depends on residues histidine 172 and glutamate 174. A GMPS ATP-PPase domain is found at 199–391; that stretch reads WSMSSFCERV…LGLPDFIVWR (193 aa). 227 to 233 lines the ATP pocket; it reads SGGIDST.

As to quaternary structure, homodimer.

It catalyses the reaction XMP + L-glutamine + ATP + H2O = GMP + L-glutamate + AMP + diphosphate + 2 H(+). Its pathway is purine metabolism; GMP biosynthesis; GMP from XMP (L-Gln route): step 1/1. Its function is as follows. Catalyzes the synthesis of GMP from XMP. The chain is GMP synthase [glutamine-hydrolyzing] from Oleidesulfovibrio alaskensis (strain ATCC BAA-1058 / DSM 17464 / G20) (Desulfovibrio alaskensis).